Reading from the N-terminus, the 190-residue chain is RNA pyrophosphohydrolase (190 aa).

The 144-residue stretch at 6-149 (GYRPNVGIIL…KRDVYTQALN (144 aa)) folds into the Nudix hydrolase domain. The Nudix box motif lies at 38–59 (GGIKYGESPVQAMYRELHEEVG). The disordered stretch occupies residues 167–190 (QRVHGPRSTDNPSSETDGHAHIAG).

The protein belongs to the Nudix hydrolase family. RppH subfamily. Requires a divalent metal cation as cofactor.

Accelerates the degradation of transcripts by removing pyrophosphate from the 5'-end of triphosphorylated RNA, leading to a more labile monophosphorylated state that can stimulate subsequent ribonuclease cleavage. This chain is RNA pyrophosphohydrolase, found in Bordetella parapertussis (strain 12822 / ATCC BAA-587 / NCTC 13253).